The primary structure comprises 187 residues: UPF0232 protein Mb0004 (187 aa).

Composition is skewed to basic and acidic residues over residues 1-17 and 35-45; these read MTGSVDRPDQNRGERLM and AARARGQDAGR. Disordered stretches follow at residues 1–23, 35–75, and 168–187; these read MTGSVDRPDQNRGERLMKSPGLD, AARA…DPQP, and PSWRKGPRHIAGRGPRDTYG.

The protein belongs to the UPF0232 family.

In Mycobacterium bovis (strain ATCC BAA-935 / AF2122/97), this protein is UPF0232 protein Mb0004.